The following is a 395-amino-acid chain: L-rhamnonate dehydratase (395 aa).

Residues histidine 23 and arginine 49 each contribute to the substrate site. Mg(2+)-binding residues include aspartate 215, glutamate 241, and glutamate 269. Histidine 319 acts as the Proton acceptor in catalysis. Glutamate 339 serves as a coordination point for substrate.

This sequence belongs to the mandelate racemase/muconate lactonizing enzyme family. RhamD subfamily. As to quaternary structure, homooctamer; tetramer of dimers. It depends on Mg(2+) as a cofactor.

It catalyses the reaction L-rhamnonate = 2-dehydro-3-deoxy-L-rhamnonate + H2O. Catalyzes the dehydration of L-rhamnonate to 2-keto-3-deoxy-L-rhamnonate (KDR). This Delftia acidovorans (strain DSM 14801 / SPH-1) protein is L-rhamnonate dehydratase.